The chain runs to 385 residues: Zinc finger protein B385R (385 aa).

The C2H2-type zinc finger occupies 166–190 (LQCPNCGCIQELMGTIFDETHFYNH).

It belongs to the asfivirus B385R family.

This is Zinc finger protein B385R from Ornithodoros (relapsing fever ticks).